A 129-amino-acid polypeptide reads, in one-letter code: Large ribosomal subunit protein bL17 (129 aa).

The protein belongs to the bacterial ribosomal protein bL17 family. In terms of assembly, part of the 50S ribosomal subunit. Contacts protein L32.

In Buchnera aphidicola subsp. Baizongia pistaciae (strain Bp), this protein is Large ribosomal subunit protein bL17.